A 732-amino-acid polypeptide reads, in one-letter code: Trehalose phosphorylase (732 aa).

Residues 1-25 constitute a propeptide that is removed on maturation; that stretch reads MAPPHQFQSKPSDVIRRRLSSAVSS.

The protein belongs to the glycosyltransferase group 1 family. Glycosyltransferase 4 subfamily. In terms of assembly, homodimer.

The catalysed reaction is alpha,alpha-trehalose + phosphate = alpha-D-glucose + alpha-D-glucose 1-phosphate. With respect to regulation, activity abolished by 1 mM Cu(2+). 0.1 mM Cu(2+) reduces trehalose phosphorolysis to 76% and trehalose synthesis to 48% of maximum activity. 1 mM Zn(2+) abolishes trehalose synthesis, and reduces trehalose phosphorolysis to 40% of maximum activity. Unaffected by EDTA. Reversibly catalyzes the synthesis and degradation of trehalose from glucose and alpha-D-glucose 1-phosphate. The equilibrium lies in the direction of trehalose synthesis. The polypeptide is Trehalose phosphorylase (Grifola frondosa (Maitake)).